The primary structure comprises 545 residues: Zinc finger protein 697 (545 aa).

Positions 1–143 (MKQEDNQGVC…EQPAPPVLPW (143 aa)) are disordered. K2 is covalently cross-linked (Glycyl lysine isopeptide (Lys-Gly) (interchain with G-Cter in SUMO2)). Acidic residues predominate over residues 23–36 (DFEDSEDREGDPEE). A compositionally biased stretch (basic and acidic residues) spans 45 to 55 (DTNKREGHPEP). Composition is skewed to acidic residues over residues 79-94 (LSEEEGVSVRGEEDDQ) and 118-135 (EDDDESAGENRLEEEEEQ). 11 consecutive C2H2-type zinc fingers follow at residues 189–211 (TICPDCGESFSPGAAFLQHQRIH), 261–283 (FRCGECGKGFSRNTYLTNHLRLH), 289–311 (NLCADCGKSFSWRADLLKHRRLH), 317–339 (YPCPECGEAFSLSSHLLSHRRAH), 353–375 (FACGECGKGFVRRSHLANHQRIH), 381–403 (HGCGECGKRFSWRSDLVKHQRVH), 409–431 (YMCSECGETFSVSSHLFTHKRTH), 437–459 (YVCRECGKGFGRNSHLVNHLRVH), 465–487 (FRCGQCEKRFSDFSTLTQHQRTH), 493–515 (YTCIECGKSFIQSSHLIRHRRIH), and 521–543 (HKCAGCGKGFRYKTHLAQHQKLH).

The protein belongs to the krueppel C2H2-type zinc-finger protein family.

The protein localises to the nucleus. Its function is as follows. RNA-interacting protein with a high number of miRNA targets. Acts as a damage-induced regulator of muscle remodeling by mediating the interferon gamma response in muscle cells. In Homo sapiens (Human), this protein is Zinc finger protein 697.